Reading from the N-terminus, the 187-residue chain is Probable nicotinate-nucleotide adenylyltransferase (187 aa).

It belongs to the NadD family.

It catalyses the reaction nicotinate beta-D-ribonucleotide + ATP + H(+) = deamido-NAD(+) + diphosphate. The protein operates within cofactor biosynthesis; NAD(+) biosynthesis; deamido-NAD(+) from nicotinate D-ribonucleotide: step 1/1. Functionally, catalyzes the reversible adenylation of nicotinate mononucleotide (NaMN) to nicotinic acid adenine dinucleotide (NaAD). The chain is Probable nicotinate-nucleotide adenylyltransferase from Anaeromyxobacter dehalogenans (strain 2CP-C).